The sequence spans 133 residues: Small ribosomal subunit protein uS8 (133 aa).

Belongs to the universal ribosomal protein uS8 family. In terms of assembly, part of the 30S ribosomal subunit. Contacts proteins S5 and S12.

One of the primary rRNA binding proteins, it binds directly to 16S rRNA central domain where it helps coordinate assembly of the platform of the 30S subunit. In Chlorobaculum parvum (strain DSM 263 / NCIMB 8327) (Chlorobium vibrioforme subsp. thiosulfatophilum), this protein is Small ribosomal subunit protein uS8.